We begin with the raw amino-acid sequence, 124 residues long: Large ribosomal subunit protein bL12 (124 aa).

It belongs to the bacterial ribosomal protein bL12 family. Homodimer. Part of the ribosomal stalk of the 50S ribosomal subunit. Forms a multimeric L10(L12)X complex, where L10 forms an elongated spine to which 2 to 4 L12 dimers bind in a sequential fashion. Binds GTP-bound translation factors.

Functionally, forms part of the ribosomal stalk which helps the ribosome interact with GTP-bound translation factors. Is thus essential for accurate translation. This chain is Large ribosomal subunit protein bL12, found in Cupriavidus taiwanensis (strain DSM 17343 / BCRC 17206 / CCUG 44338 / CIP 107171 / LMG 19424 / R1) (Ralstonia taiwanensis (strain LMG 19424)).